Here is a 123-residue protein sequence, read N- to C-terminus: Ribonuclease P protein component (123 aa).

Belongs to the RnpA family. In terms of assembly, consists of a catalytic RNA component (M1 or rnpB) and a protein subunit.

The enzyme catalyses Endonucleolytic cleavage of RNA, removing 5'-extranucleotides from tRNA precursor.. Its function is as follows. RNaseP catalyzes the removal of the 5'-leader sequence from pre-tRNA to produce the mature 5'-terminus. It can also cleave other RNA substrates such as 4.5S RNA. The protein component plays an auxiliary but essential role in vivo by binding to the 5'-leader sequence and broadening the substrate specificity of the ribozyme. This is Ribonuclease P protein component from Streptococcus pneumoniae (strain Hungary19A-6).